A 362-amino-acid chain; its full sequence is Protein-arginine kinase (362 aa).

The Phosphagen kinase C-terminal domain maps to 24–255 (IVLSSRIRLA…QQLIAQERMA (232 aa)). Residues 27-31 (SSRIR), histidine 92, arginine 126, 177-181 (RASVM), and 208-213 (RGTYGE) contribute to the ATP site. Residues 338–343 (RDVRRA) carry the RDXXRA motif of the pArg binding pocket involved in allosteric regulation motif.

Belongs to the ATP:guanido phosphotransferase family.

It carries out the reaction L-arginyl-[protein] + ATP = N(omega)-phospho-L-arginyl-[protein] + ADP + H(+). Appears to be allosterically activated by the binding of pArg-containing polypeptides to the pArg-binding pocket localized in the C-terminal domain of McsB. Its function is as follows. Catalyzes the specific phosphorylation of arginine residues in a large number of proteins. Is part of the bacterial stress response system. Protein arginine phosphorylation has a physiologically important role and is involved in the regulation of many critical cellular processes, such as protein homeostasis, motility, competence, and stringent and stress responses, by regulating gene expression and protein activity. The polypeptide is Protein-arginine kinase (Geobacillus sp. (strain WCH70)).